The sequence spans 438 residues: Protein c-ets-1-A (438 aa).

The region spanning 49–134 (ATFSRFTKEQ…EHLEILQKDS (86 aa)) is the PNT domain. The activation domain; required for transcription activation stretch occupies residues 128-240 (EILQKDSKQY…DNMCLGRISR (113 aa)). The segment at 301 to 309 (FKDYVRDRA) is helix HI-1. The helix HI-2 stretch occupies residues 320-327 (AAALAGYT). The ETS DNA-binding region spans 332 to 412 (IQLWQFLLEL…AGKRYVYRFV (81 aa)). Residues 415 to 419 (LQSLL) are helix H4. The tract at residues 423-429 (PEELHAM) is helix H5.

This sequence belongs to the ETS family. Binds DNA as a homodimer; homodimerization is required for transcription activation.

Its subcellular location is the nucleus. The protein resides in the cytoplasm. Its activity is regulated as follows. Autoinhibited by a module composed of four alpha helices (HI-1, HI-2, H4, and H5) that flank the DNA-binding ETS domain, reducing the affinity for DNA. Its function is as follows. Transcription factor. Directly controls the expression of cytokine and chemokine genes in a wide variety of different cellular contexts. In Xenopus laevis (African clawed frog), this protein is Protein c-ets-1-A (ets1-a).